Reading from the N-terminus, the 950-residue chain is Protocadherin alpha-8 (950 aa).

A signal peptide spans Met-1 to Gly-29. Cadherin domains are found at residues Gln-30 to Phe-133, Ala-157 to Phe-242, Glu-243 to Ile-350, Ala-351 to Phe-455, Ala-456 to Leu-565, and Val-581 to Ala-678. At Gln-30–Asn-697 the chain is on the extracellular side. 2 N-linked (GlcNAc...) asparagine glycosylation sites follow: Asn-257 and Asn-265. An N-linked (GlcNAc...) asparagine glycan is attached at Asn-548. The helical transmembrane segment at Val-698–Tyr-718 threads the bilayer. Over Thr-719–Gln-950 the chain is Cytoplasmic. PXXP repeat units lie at residues Pro-774 to Pro-777, Pro-799 to Pro-802, Pro-832 to Pro-835, Pro-873 to Pro-876, and Pro-891 to Pro-894. The interval Pro-774–Pro-894 is 5 X 4 AA repeats of P-X-X-P. The tract at residues Gly-831 to Gln-950 is disordered. Basic and acidic residues predominate over residues Asp-909–Lys-923.

It is found in the cell membrane. Its function is as follows. Potential calcium-dependent cell-adhesion protein. May be involved in the establishment and maintenance of specific neuronal connections in the brain. This chain is Protocadherin alpha-8 (PCDHA8), found in Pan troglodytes (Chimpanzee).